The primary structure comprises 662 residues: DNA topoisomerase 4 subunit B (662 aa).

ATP contacts are provided by residues Tyr-20, Asn-60, Asp-87, 129 to 135, and Lys-359; that span reads GLHGVGI. The Toprim domain maps to 439–553; it reads TELFIVEGDS…EGHLYLAKPP (115 aa). Mg(2+)-binding residues include Glu-445, Asp-518, and Asp-520.

It belongs to the type II topoisomerase family. ParE type 1 subfamily. Heterotetramer composed of ParC and ParE. The cofactor is Mg(2+). Mn(2+) serves as cofactor. It depends on Ca(2+) as a cofactor.

It catalyses the reaction ATP-dependent breakage, passage and rejoining of double-stranded DNA.. Its function is as follows. Topoisomerase IV is essential for chromosome segregation. It relaxes supercoiled DNA. Performs the decatenation events required during the replication of a circular DNA molecule. This chain is DNA topoisomerase 4 subunit B, found in Rickettsia conorii (strain ATCC VR-613 / Malish 7).